A 367-amino-acid polypeptide reads, in one-letter code: Serine/threonine-protein kinase Sgk2 (367 aa).

Residues 1–28 are disordered; that stretch reads MASSPVGVPSPQPSRANGNINLGPSANP. Position 10 is a phosphoserine (Ser10). Polar residues predominate over residues 15 to 28; that stretch reads RANGNINLGPSANP. Residues 35–292 enclose the Protein kinase domain; the sequence is FDFLKVIGKG…FLDIKNHMFF (258 aa). Residues 41–49 and Lys64 contribute to the ATP site; that span reads IGKGNYGKV. Residues 68–78 carry the Nuclear localization signal motif; the sequence is KKSILKNKEQN. Asp159 functions as the Proton acceptor in the catalytic mechanism. Thr193 bears the Phosphothreonine; by PDPK1 mark. The AGC-kinase C-terminal domain maps to 293 to 367; the sequence is SPINWDDLYH…AQDDDDILDS (75 aa). 2 positions are modified to phosphoserine: Ser334 and Ser356. A Phosphotyrosine modification is found at Tyr357.

It belongs to the protein kinase superfamily. AGC Ser/Thr protein kinase family. Post-translationally, activated by phosphorylation on Ser-356 by an unknown kinase (may be mTORC2 but not confirmed), transforming it into a substrate for PDPK1 which then phosphorylates it on Thr-193.

The protein localises to the cytoplasm. The protein resides in the nucleus. The enzyme catalyses L-seryl-[protein] + ATP = O-phospho-L-seryl-[protein] + ADP + H(+). It catalyses the reaction L-threonyl-[protein] + ATP = O-phospho-L-threonyl-[protein] + ADP + H(+). Two specific sites, one in the kinase domain (Thr-193) and the other in the C-terminal regulatory region (Ser-356), need to be phosphorylated for its full activation. In terms of biological role, serine/threonine-protein kinase which is involved in the regulation of a wide variety of ion channels, membrane transporters, cell growth, survival and proliferation. Up-regulates Na(+) channels: SCNN1A/ENAC, K(+) channels: KCNA3/Kv1.3, KCNE1 and KCNQ1, amino acid transporter: SLC6A19, glutamate transporter: SLC1A6/EAAT4, glutamate receptors: GRIA1/GLUR1 and GRIK2/GLUR6, Na(+)/H(+) exchanger: SLC9A3/NHE3, and the Na(+)/K(+) ATPase. In Mus musculus (Mouse), this protein is Serine/threonine-protein kinase Sgk2 (Sgk2).